A 595-amino-acid chain; its full sequence is Aspartate--tRNA ligase (595 aa).

Glutamate 173 is an L-aspartate binding site. Residues 197–200 are aspartate; sequence QLFK. Arginine 219 is an L-aspartate binding site. ATP contacts are provided by residues 219–221 and glutamine 228; that span reads RDE. Residue histidine 449 participates in L-aspartate binding. Glutamate 483 contacts ATP. Arginine 490 contributes to the L-aspartate binding site. 535–538 provides a ligand contact to ATP; the sequence is GLDR.

The protein belongs to the class-II aminoacyl-tRNA synthetase family. Type 1 subfamily. In terms of assembly, homodimer.

It is found in the cytoplasm. The catalysed reaction is tRNA(Asp) + L-aspartate + ATP = L-aspartyl-tRNA(Asp) + AMP + diphosphate. Functionally, catalyzes the attachment of L-aspartate to tRNA(Asp) in a two-step reaction: L-aspartate is first activated by ATP to form Asp-AMP and then transferred to the acceptor end of tRNA(Asp). This is Aspartate--tRNA ligase from Shewanella woodyi (strain ATCC 51908 / MS32).